The primary structure comprises 150 residues: General odorant-binding protein 19d (150 aa).

An N-terminal signal peptide occupies residues 1 to 23 (MSHLVHLTVLLLVGILCLGATSA). 3 cysteine pairs are disulfide-bonded: Cys-41-Cys-72, Cys-68-Cys-126, and Cys-116-Cys-135.

This sequence belongs to the PBP/GOBP family. Expressed in the antenna, mostly on the anterior surface of the third antennal segment. Also detected in the maxillary palps and in cells at the bases of the taste hairs on the proboscis and internal taste organs of the head.

The protein resides in the secreted. The polypeptide is General odorant-binding protein 19d (Obp19d) (Drosophila melanogaster (Fruit fly)).